A 93-amino-acid polypeptide reads, in one-letter code: Pyrimidine/purine nucleoside phosphorylase (93 aa).

This sequence belongs to the nucleoside phosphorylase PpnP family.

The enzyme catalyses a purine D-ribonucleoside + phosphate = a purine nucleobase + alpha-D-ribose 1-phosphate. It catalyses the reaction adenosine + phosphate = alpha-D-ribose 1-phosphate + adenine. The catalysed reaction is cytidine + phosphate = cytosine + alpha-D-ribose 1-phosphate. It carries out the reaction guanosine + phosphate = alpha-D-ribose 1-phosphate + guanine. The enzyme catalyses inosine + phosphate = alpha-D-ribose 1-phosphate + hypoxanthine. It catalyses the reaction thymidine + phosphate = 2-deoxy-alpha-D-ribose 1-phosphate + thymine. The catalysed reaction is uridine + phosphate = alpha-D-ribose 1-phosphate + uracil. It carries out the reaction xanthosine + phosphate = alpha-D-ribose 1-phosphate + xanthine. In terms of biological role, catalyzes the phosphorolysis of diverse nucleosides, yielding D-ribose 1-phosphate and the respective free bases. Can use uridine, adenosine, guanosine, cytidine, thymidine, inosine and xanthosine as substrates. Also catalyzes the reverse reactions. This chain is Pyrimidine/purine nucleoside phosphorylase, found in Vibrio vulnificus (strain CMCP6).